The primary structure comprises 550 residues: Forkhead box protein N4 (550 aa).

Positions 231 to 327 (KPIYSYSCLI…EEMQKWKRKD (97 aa)) form a DNA-binding region, fork-head. Residues 402–411 (LQNQSRLAPS) show a composition bias toward low complexity. The tract at residues 402–437 (LQNQSRLAPSSPAPAQTPPLHTVPDMTNSSLPQHPA) is disordered.

As to expression, isoform 1 is expressed mainly in adult thymus. Isoform 2 is detected in adult skin. Isoform 3 is expressed in adult brain and embryo. Prominent expression sites include the olfactory placode, the basal layer of the olfactory epithelium, the neuroepithelium of the developing retina, the germinal zone of the differentiated eye, regions of motoneuron development in the neural tube and periventricular regions of the brain.

The protein resides in the nucleus. Functionally, transcription factor essential for neural and some non-neural tissues development. Binds to an 11-bp consensus sequence containing the invariant tetranucleotide 5'-ACGC-3'. During development of the central nervous system, required to specify the amacrine and horizontal cell fates from multipotent retinal progenitors while suppressing the alternative photoreceptor cell fates. Drives commitment of p2 progenitors to the V2b interneuron fates during spinal cord neurogenesis. In development of non-neural tissues, plays an essential role in the specification of the atrioventricular canal. In Danio rerio (Zebrafish), this protein is Forkhead box protein N4 (foxn4).